A 1045-amino-acid polypeptide reads, in one-letter code: Desmoglein-1 (1045 aa).

The N-terminal stretch at 1–23 (MNWPFFRTAAVLFIFLVVLEVNS) is a signal peptide. Residues 24 to 49 (EFRIQVRDYNTKNGTIKWHSIRRQKR) constitute a propeptide that is removed on maturation. 3 N-linked (GlcNAc...) asparagine glycosylation sites follow: Asn-36, Asn-110, and Asn-180. 4 consecutive Cadherin domains span residues 50-158 (EWIK…PVFS), 159-270 (MSTF…PYME), 271-385 (LPSN…GSVF), and 386-496 (RPGS…TDGA). The Extracellular portion of the chain corresponds to 50 to 546 (EWIKFAAACR…HPLDNVHFGP (497 aa)). A helical membrane pass occupies residues 547-567 (AGIGLLIMGFLVLGLVPFLLM). The Cytoplasmic segment spans residues 568-1045 (YCDCGGAPGG…TKYSTVQYTK (478 aa)). Desmoglein repeat repeat units follow at residues 814-840 (TYPS…TMTE), 841-870 (SYTT…ERVV), 871-900 (GPIS…ERVI), 901-928 (APNS…ERVI), and 929-957 (RPTS…ERVV). The tract at residues 1019–1045 (FSNTLGSASPTTTRSRITKYSTVQYTK) is disordered. The span at 1020–1045 (SNTLGSASPTTTRSRITKYSTVQYTK) shows a compositional bias: polar residues.

In terms of assembly, binds to JUP/plakoglobin. Interacts with PKP2. Interacts with DSC3; there is evidence to suggest that the interaction promotes cell-cell adhesion of keratinocytes.

It is found in the cell membrane. It localises to the cell junction. Its subcellular location is the desmosome. The protein resides in the cytoplasm. The protein localises to the nucleus. In terms of biological role, component of intercellular desmosome junctions. Involved in the interaction of plaque proteins and intermediate filaments mediating cell-cell adhesion. In Sus scrofa (Pig), this protein is Desmoglein-1 (DSG1).